Consider the following 813-residue polypeptide: MQFPFSGAGPGVFTSSPALSLALADAVAGRNSGGGGKMVTAAHGGVGGGGGGGRAKARDALEVENEMSRSGSDHLDVVSCGDAGGGGGDDDDDEDAEHGNPPKRKKRYHRHTPQQIQELEAMFKECPHPDEKQRAELSKRLGLEPRQVKFWFQNRRTQMKMQLERHENSLLKQENDKLRSENLSIREATSNAVCVGCGGPAMLGEVSLEEHHLRVENARLKDELSRVCALAAKFLGKSISVMAPPQMHQPHPVPGSSLELAVGGIGSMPSATMPISTITDFAGAMSSSMGTVITPMKSEAEPSAMAGIDKSLFLELAMSAMDELVKMAQMGDPLWIPGASVPSSPAKESLNFEEYLNTFPPCIGVKPEGYVSEASRESGIVIIDDGAALVETLMDERRWSDMFSCMIAKASTTEEISTGVAGSRNGALLLVSDEHSVMQAELQVLSPLVPIREVKFLRFSKQLADGVWAVVDVSADELMRDQGITSASSTANMNCRRLPSGCVLQDTPNGFVKVTWVEHTEYDEASVHPLYRPLLRSGLALGAGRWIATLQRQCECLALLMSSIALPENDSSAIHPEGKRSMLKLARRMTDNFCAGVSTSSTREWSKLVGLTGNIGEDVHVMARKSVDEPGTPPGVVLSAATSVWMPVMPERLFNFLHNKGLRAEWDILSNGGPMQEVTSIAKGQQNGNTVCLLKASPTKDKQNSMLILQETCADASGSMVVYAPVDIPAMHLVMSGGDSSCVALLPSGFAILPAGPSIGADHKMGGSLLTVAFQILANSQPSAKLTVESVETVSNLISCTIKKIKTALHCDV.

The disordered stretch occupies residues 62-112 (EVENEMSRSGSDHLDVVSCGDAGGGGGDDDDDEDAEHGNPPKRKKRYHRHT). The span at 101–112 (PPKRKKRYHRHT) shows a compositional bias: basic residues. The homeobox DNA-binding region spans 104 to 163 (RKKRYHRHTPQQIQELEAMFKECPHPDEKQRAELSKRLGLEPRQVKFWFQNRRTQMKMQL). Residues 152 to 191 (FQNRRTQMKMQLERHENSLLKQENDKLRSENLSIREATSN) adopt a coiled-coil conformation. Positions 306 to 559 (AGIDKSLFLE…LQRQCECLAL (254 aa)) constitute an START domain.

Belongs to the HD-ZIP homeobox family. Class IV subfamily.

It localises to the nucleus. Probable transcription factor. This chain is Homeobox-leucine zipper protein ROC4 (ROC4), found in Oryza sativa subsp. japonica (Rice).